The chain runs to 404 residues: uncharacterized protein (404 aa).

8 helical membrane passes run 1 to 21, 32 to 52, 89 to 109, 182 to 202, 261 to 281, 285 to 305, 344 to 364, and 384 to 404; these read MNVL…FLFS, VIVG…WEAG, AFAL…AVLY, LFGY…SFMA, LAFV…FGLF, GVTL…LIGV, ATII…AIML, and KAVL…GMFI.

It belongs to the concentrative nucleoside transporter (CNT) (TC 2.A.41) family.

The protein resides in the cell membrane. This is an uncharacterized protein from Bacillus subtilis (strain 168).